The primary structure comprises 401 residues: MKKLWQNCHIATMQNGQYSYIEDAAIVTEGHLIHWIGKQQQLPADTYSETVDLNGAWVTPGFIDCHTHSVFGGNRSVEFEKRLQGVSYAEIAASGGGIASTVRATREASEEQLLNSALKRIRCMQQDGVTTIEIKSGYGLNYENERKMLRVIRQIGEKLPMTVKSTCLAAHALPPEYKDQSDAYIEHICTEMLPKLHAEGLVDAVDAFCEHLAFSPAQVERVFKTAQSLGLPVKLHAEQLSSLGGSSLAARYHALSADHLEYMTEDDVKAMAESGTVAVLLPGAFYLLRETQYPPIESLIKHGVRIALSSDLNPGTSPALSLRLMLNMGSTLFRLTPEQALAGITIHAAQALGLEQTHGSLEQGKVADFVAWDIEHPSEIVYWLGGDLPKRVVQHGQEVIF.

2 residues coordinate Fe(3+): histidine 66 and histidine 68. The Zn(2+) site is built by histidine 66 and histidine 68. Residues arginine 75, tyrosine 138, and histidine 171 each contribute to the 4-imidazolone-5-propanoate site. Tyrosine 138 is a binding site for N-formimidoyl-L-glutamate. Histidine 236 serves as a coordination point for Fe(3+). Histidine 236 contributes to the Zn(2+) binding site. Glutamine 239 contributes to the 4-imidazolone-5-propanoate binding site. Position 311 (aspartate 311) interacts with Fe(3+). Residue aspartate 311 coordinates Zn(2+). Positions 313 and 315 each coordinate N-formimidoyl-L-glutamate. Residue threonine 316 coordinates 4-imidazolone-5-propanoate.

Belongs to the metallo-dependent hydrolases superfamily. HutI family. Requires Zn(2+) as cofactor. It depends on Fe(3+) as a cofactor.

It is found in the cytoplasm. It catalyses the reaction 4-imidazolone-5-propanoate + H2O = N-formimidoyl-L-glutamate. It participates in amino-acid degradation; L-histidine degradation into L-glutamate; N-formimidoyl-L-glutamate from L-histidine: step 3/3. In terms of biological role, catalyzes the hydrolytic cleavage of the carbon-nitrogen bond in imidazolone-5-propanoate to yield N-formimidoyl-L-glutamate. It is the third step in the universal histidine degradation pathway. The polypeptide is Imidazolonepropionase (Acinetobacter baumannii (strain AB307-0294)).